The primary structure comprises 351 residues: Phospho-N-acetylmuramoyl-pentapeptide-transferase (351 aa).

10 consecutive transmembrane segments (helical) span residues 3-23 (GIIAAAGISLLVSFLLLPPLI), 51-71 (TMGGIAIIFGTVVGYFGAHAV), 76-96 (PTVSGVLVILLFVGLGCVGFL), 113-133 (GAKMLGQIIVGVGFAIGVTMF), 152-172 (FGPPMAVWLFVIWALLLIVAT), 181-201 (GLDGLATGATILSLVAYVIIG), 223-243 (PLDLAVVAAAALGGCIAFLWF), 250-270 (IFMGDTGSLALGGLLVGLAIT), 275-295 (LLLLVIGGLFVLITASVIIQV), and 329-349 (FWIIQGLFVAAAMALFYLEWM).

The protein belongs to the glycosyltransferase 4 family. MraY subfamily. Mg(2+) is required as a cofactor.

It is found in the cell membrane. The enzyme catalyses UDP-N-acetyl-alpha-D-muramoyl-L-alanyl-gamma-D-glutamyl-meso-2,6-diaminopimeloyl-D-alanyl-D-alanine + di-trans,octa-cis-undecaprenyl phosphate = di-trans,octa-cis-undecaprenyl diphospho-N-acetyl-alpha-D-muramoyl-L-alanyl-D-glutamyl-meso-2,6-diaminopimeloyl-D-alanyl-D-alanine + UMP. It functions in the pathway cell wall biogenesis; peptidoglycan biosynthesis. In terms of biological role, catalyzes the initial step of the lipid cycle reactions in the biosynthesis of the cell wall peptidoglycan: transfers peptidoglycan precursor phospho-MurNAc-pentapeptide from UDP-MurNAc-pentapeptide onto the lipid carrier undecaprenyl phosphate, yielding undecaprenyl-pyrophosphoryl-MurNAc-pentapeptide, known as lipid I. The protein is Phospho-N-acetylmuramoyl-pentapeptide-transferase of Thermobifida fusca (strain YX).